A 739-amino-acid chain; its full sequence is Photosystem I P700 chlorophyll a apoprotein A1 (739 aa).

8 consecutive transmembrane segments (helical) span residues 61 to 84, 147 to 170, 186 to 210, 281 to 299, 336 to 359, 375 to 401, 423 to 445, and 520 to 538; these read IFSA…FHGA, LYVT…FHYH, MNHH…HVSL, VAHH…GHMY, WHAQ…HHMY, LSLF…IFMV, AIIS…LYIH, and FMVH…LILL. Residues C562 and C571 each coordinate [4Fe-4S] cluster. 2 consecutive transmembrane segments (helical) span residues 578-599 and 653-675; these read HVFL…HFSW and LSAY…MFLF. Chlorophyll a' is bound at residue H664. The chlorophyll a site is built by M672 and Y680. Residue W681 coordinates phylloquinone. A helical transmembrane segment spans residues 713–733; that stretch reads AVGVAHYLLGGIVTTWAFFLA.

This sequence belongs to the PsaA/PsaB family. As to quaternary structure, the PsaA/B heterodimer binds the P700 chlorophyll special pair and subsequent electron acceptors. PSI consists of a core antenna complex that captures photons, and an electron transfer chain that converts photonic excitation into a charge separation. The cyanobacterial PSI reaction center is composed of one copy each of PsaA,B,C,D,E,F,I,J,K,L,M and X, and forms trimeric complexes. It depends on PSI electron transfer chain: 5 chlorophyll a, 1 chlorophyll a', 2 phylloquinones and 3 4Fe-4S clusters. PSI core antenna: 90 chlorophyll a, 22 carotenoids, 3 phospholipids and 1 galactolipid. P700 is a chlorophyll a/chlorophyll a' dimer, A0 is one or more chlorophyll a, A1 is one or both phylloquinones and FX is a shared 4Fe-4S iron-sulfur center. as a cofactor.

It is found in the cellular thylakoid membrane. The catalysed reaction is reduced [plastocyanin] + hnu + oxidized [2Fe-2S]-[ferredoxin] = oxidized [plastocyanin] + reduced [2Fe-2S]-[ferredoxin]. PsaA and PsaB bind P700, the primary electron donor of photosystem I (PSI), as well as the electron acceptors A0, A1 and FX. PSI is a plastocyanin/cytochrome c6-ferredoxin oxidoreductase, converting photonic excitation into a charge separation, which transfers an electron from the donor P700 chlorophyll pair to the spectroscopically characterized acceptors A0, A1, FX, FA and FB in turn. Oxidized P700 is reduced on the lumenal side of the thylakoid membrane by plastocyanin or cytochrome c6. The chain is Photosystem I P700 chlorophyll a apoprotein A1 from Picosynechococcus sp. (strain ATCC 27264 / PCC 7002 / PR-6) (Agmenellum quadruplicatum).